A 305-amino-acid chain; its full sequence is GS homeobox 2 (305 aa).

2 disordered regions span residues 115-151 (DAQFCPRVSHAHHHHHPPQHHHHHHQPQQPGSAAAAA) and 259-305 (KKEG…ISPL). Positions 123 to 140 (SHAHHHHHPPQHHHHHHQ) are enriched in basic residues. Residues 141 to 151 (PQQPGSAAAAA) show a composition bias toward low complexity. Residues 203–262 (GKRMRTAFTSTQLLELEREFSSNMYLSRLRRIEIATYLNLSEKQVKIWFQNRRVKHKKEG) constitute a DNA-binding region (homeobox).

It belongs to the Antp homeobox family.

It is found in the nucleus. Transcription factor that binds 5'-CNAATTAG-3' DNA sequence and regulates the expression of numerous genes including genes important for brain development. During telencephalic development, causes ventralization of pallial progenitors and, depending on the developmental stage, specifies different neuronal fates. At early stages, necessary and sufficient to correctly specify the ventral lateral ganglionic eminence (LGE) and its major derivatives, the striatal projection neurons. At later stages, may specify LGE progenitors toward dorsal LGE fates, including olfactory bulb interneurons. This is GS homeobox 2 (Gsx2) from Mus musculus (Mouse).